Reading from the N-terminus, the 386-residue chain is Diaminopimelate decarboxylase (386 aa).

Residue lysine 49 is modified to N6-(pyridoxal phosphate)lysine. Pyridoxal 5'-phosphate-binding positions include glycine 228 and 266 to 269 (ELGR). Arginine 269, arginine 305, tyrosine 309, glutamate 335, and tyrosine 363 together coordinate substrate. Tyrosine 363 is a pyridoxal 5'-phosphate binding site.

It belongs to the Orn/Lys/Arg decarboxylase class-II family. LysA subfamily. As to quaternary structure, homodimer. Requires pyridoxal 5'-phosphate as cofactor.

It catalyses the reaction meso-2,6-diaminopimelate + H(+) = L-lysine + CO2. Its pathway is amino-acid biosynthesis; L-lysine biosynthesis via DAP pathway; L-lysine from DL-2,6-diaminopimelate: step 1/1. Its function is as follows. Specifically catalyzes the decarboxylation of meso-diaminopimelate (meso-DAP) to L-lysine. The polypeptide is Diaminopimelate decarboxylase (Bacteroides thetaiotaomicron (strain ATCC 29148 / DSM 2079 / JCM 5827 / CCUG 10774 / NCTC 10582 / VPI-5482 / E50)).